We begin with the raw amino-acid sequence, 200 residues long: MASSLTCTGVIWALLSFLCAATSCVGFFMPYWLWGSQLGKPVSFGTFRRCSYPVHDESRQMMVMVEECGRYASFQGIPSAEWRICTIVTGLGCGLLLLVALTALMGCCVSDLISRTVGRVAGGIQFLGGLLIGAGCALYPLGWDSEEVRQTCGYTSGQFDLGKCEIGWAYYCTGAGATAAMLLCTWLACFSGKKQKHYPY.

The N-terminal stretch at 1-21 (MASSLTCTGVIWALLSFLCAA) is a signal peptide. Helical transmembrane passes span 84 to 104 (ICTIVTGLGCGLLLLVALTAL), 123 to 143 (GIQFLGGLLIGAGCALYPLGW), and 166 to 186 (IGWAYYCTGAGATAAMLLCTW).

The protein belongs to the LHFP family. In terms of tissue distribution, pancreas, kidney, skeletal muscle, liver, lung brain, heart, colon, small intestine, uterus, testis, prostate, thymus, spleen and placenta.

It is found in the membrane. The protein is LHFPL tetraspan subfamily member 6 protein of Homo sapiens (Human).